A 631-amino-acid chain; its full sequence is ATP-dependent zinc metalloprotease FtsH (631 aa).

The Stromal portion of the chain corresponds to 1–2 (MK). The helical transmembrane segment at 3 to 23 (ISWKNILLTLIPLGLISFLVW) threads the bilayer. Residues 24–118 (QGFNNTTNPQ…AHATNDSTPA (95 aa)) are Lumenal-facing. Residues 119–139 (WSLIGNLIFPILLIAGLAFLF) traverse the membrane as a helical segment. The Stromal segment spans residues 140–631 (RRSSNLPGGP…IDYKSQLKST (492 aa)). An ATP-binding site is contributed by 213 to 220 (GPPGTGKT). Histidine 434 lines the Zn(2+) pocket. Glutamate 435 is a catalytic residue. Positions 438 and 512 each coordinate Zn(2+).

The protein in the central section; belongs to the AAA ATPase family. It in the C-terminal section; belongs to the peptidase M41 family. In terms of assembly, homohexamer. Zn(2+) serves as cofactor.

It localises to the plastid. The protein localises to the chloroplast thylakoid membrane. Acts as a processive, ATP-dependent zinc metallopeptidase. The polypeptide is ATP-dependent zinc metalloprotease FtsH (Guillardia theta (Cryptophyte)).